The chain runs to 673 residues: Potassium-transporting ATPase ATP-binding subunit (673 aa).

The next 4 membrane-spanning stretches (helical) occupy residues 34-54 (IMFV…YPDL), 65-85 (VFSI…SEAL), 216-236 (IALF…ILTM), and 253-273 (IALA…AIGI). The 4-aspartylphosphate intermediate role is filled by Asp-304. ATP is bound by residues Asp-341, Glu-345, 370–377 (FTAETRMS), and Lys-388. Positions 511 and 515 each coordinate Mg(2+). The next 3 membrane-spanning stretches (helical) occupy residues 581–601 (FAIL…LNIM), 609–629 (AVLS…PIAM), and 649–669 (VYGL…DLII).

The protein belongs to the cation transport ATPase (P-type) (TC 3.A.3) family. Type IA subfamily. As to quaternary structure, the system is composed of three essential subunits: KdpA, KdpB and KdpC.

It localises to the cell membrane. It carries out the reaction K(+)(out) + ATP + H2O = K(+)(in) + ADP + phosphate + H(+). In terms of biological role, part of the high-affinity ATP-driven potassium transport (or Kdp) system, which catalyzes the hydrolysis of ATP coupled with the electrogenic transport of potassium into the cytoplasm. This subunit is responsible for energy coupling to the transport system and for the release of the potassium ions to the cytoplasm. This chain is Potassium-transporting ATPase ATP-binding subunit, found in Staphylococcus epidermidis (strain ATCC 35984 / DSM 28319 / BCRC 17069 / CCUG 31568 / BM 3577 / RP62A).